A 428-amino-acid polypeptide reads, in one-letter code: Serine--tRNA ligase (428 aa).

235-237 is an L-serine binding site; the sequence is TAE. Residue 266 to 268 participates in ATP binding; it reads RSE. E289 contributes to the L-serine binding site. 353-356 provides a ligand contact to ATP; that stretch reads EISS. S389 contributes to the L-serine binding site.

It belongs to the class-II aminoacyl-tRNA synthetase family. Type-1 seryl-tRNA synthetase subfamily. Homodimer. The tRNA molecule binds across the dimer.

The protein localises to the cytoplasm. The catalysed reaction is tRNA(Ser) + L-serine + ATP = L-seryl-tRNA(Ser) + AMP + diphosphate + H(+). It catalyses the reaction tRNA(Sec) + L-serine + ATP = L-seryl-tRNA(Sec) + AMP + diphosphate + H(+). It functions in the pathway aminoacyl-tRNA biosynthesis; selenocysteinyl-tRNA(Sec) biosynthesis; L-seryl-tRNA(Sec) from L-serine and tRNA(Sec): step 1/1. Its function is as follows. Catalyzes the attachment of serine to tRNA(Ser). Is also able to aminoacylate tRNA(Sec) with serine, to form the misacylated tRNA L-seryl-tRNA(Sec), which will be further converted into selenocysteinyl-tRNA(Sec). In Shewanella pealeana (strain ATCC 700345 / ANG-SQ1), this protein is Serine--tRNA ligase.